The primary structure comprises 222 residues: Countin-3 (222 aa).

The N-terminal stretch at 1-20 is a signal peptide; sequence MNKILSLFLITILLISKVMS. One can recognise a Saposin B-type domain in the interval 21 to 105; sequence SSEECKLCTD…ESVKMCQYND (85 aa). Disulfide bonds link Cys-25–Cys-101, Cys-28–Cys-95, and Cys-56–Cys-68. Residues Asn-108, Asn-134, and Asn-218 are each glycosylated (N-linked (GlcNAc...) asparagine).

Belongs to the countin family.

It localises to the secreted. In terms of biological role, may control the size of the multicellular structure. The sequence is that of Countin-3 (ctnC) from Dictyostelium discoideum (Social amoeba).